Here is a 107-residue protein sequence, read N- to C-terminus: Anti-adapter protein IraM (107 aa).

The protein belongs to the IraM/RssC family.

It localises to the cytoplasm. Functionally, inhibits RpoS proteolysis by regulating RssB activity, thereby increasing the stability of the sigma stress factor RpoS during magnesium starvation. The polypeptide is Anti-adapter protein IraM (Escherichia coli O17:K52:H18 (strain UMN026 / ExPEC)).